Reading from the N-terminus, the 92-residue chain is Small ribosomal subunit protein uS19c (92 aa).

This sequence belongs to the universal ribosomal protein uS19 family.

It is found in the plastid. It localises to the chloroplast. In terms of biological role, protein S19 forms a complex with S13 that binds strongly to the 16S ribosomal RNA. The sequence is that of Small ribosomal subunit protein uS19c from Ceratophyllum demersum (Rigid hornwort).